A 631-amino-acid chain; its full sequence is tRNA uridine 5-carboxymethylaminomethyl modification enzyme MnmG (631 aa).

Residues 15 to 20 (GAGHAG), Ile127, and Ser182 each bind FAD. 276–290 (GPRYCPSIEDKIVRF) serves as a coordination point for NAD(+). Residue Gln373 coordinates FAD.

The protein belongs to the MnmG family. Homodimer. Heterotetramer of two MnmE and two MnmG subunits. It depends on FAD as a cofactor.

The protein localises to the cytoplasm. NAD-binding protein involved in the addition of a carboxymethylaminomethyl (cmnm) group at the wobble position (U34) of certain tRNAs, forming tRNA-cmnm(5)s(2)U34. This is tRNA uridine 5-carboxymethylaminomethyl modification enzyme MnmG from Streptococcus mutans serotype c (strain ATCC 700610 / UA159).